The sequence spans 201 residues: Fas apoptotic inhibitory molecule 1 (201 aa).

This sequence belongs to the FAIM1 family.

Its subcellular location is the cytoplasm. Functionally, plays a role as an inducible effector molecule that mediates Fas resistance produced by surface Ig engagement in B cells. In Rattus norvegicus (Rat), this protein is Fas apoptotic inhibitory molecule 1 (Faim).